The sequence spans 914 residues: Probable UDP-N-acetylglucosamine--peptide N-acetylglucosaminyltransferase SPINDLY (914 aa).

A disordered region spans residues 1-39 (MVGLEDDTERERSPVVENGFSNGSRSSSSSAGVLSPSRK). Residues 19–37 (GFSNGSRSSSSSAGVLSPS) are compositionally biased toward low complexity. The residue at position 35 (Ser-35) is a Phosphoserine. TPR repeat units follow at residues 43 to 76 (GNDT…DSKN), 77 to 110 (VEAH…DPHN), 112 to 144 (CALT…DASY), 152 to 185 (AIVL…DPHY), 186 to 219 (APAY…RPMY), 220 to 253 (AEAY…SPNF), 261 to 294 (AIAL…NWHY), 295 to 328 (ADAM…NPHC), 329 to 362 (AEAC…KPNF), 364 to 396 (QSLN…NPTY), and 397 to 430 (AEAF…DPDS). The tract at residues 431–914 (RNAGQNRLLA…QLSKRMDSTS (484 aa)) is catalytic region. The tract at residues 866–914 (PLISKDLGPSRVSVTGEATPSLKANGSAPVPSSLPTQSPQLSKRMDSTS) is disordered. Residues 877 to 889 (VSVTGEATPSLKA) show a composition bias toward polar residues. A compositionally biased stretch (low complexity) spans 894-907 (PVPSSLPTQSPQLS).

Belongs to the glycosyltransferase 41 family. O-GlcNAc transferase subfamily. Homomultimer; via its TPR repeats. Interacts with GI. Interacts with TCP14 and TCP15. Interacts (via N-terminus) with APRR5. Interacts with CPN20. Widely expressed. Present throughout the plant (at protein level).

The protein localises to the cytoplasm. Its subcellular location is the nucleus. The catalysed reaction is L-seryl-[protein] + UDP-N-acetyl-alpha-D-glucosamine = 3-O-(N-acetyl-beta-D-glucosaminyl)-L-seryl-[protein] + UDP + H(+). It catalyses the reaction L-threonyl-[protein] + UDP-N-acetyl-alpha-D-glucosamine = 3-O-(N-acetyl-beta-D-glucosaminyl)-L-threonyl-[protein] + UDP + H(+). It carries out the reaction L-seryl-[protein] + GDP-beta-L-fucose = 3-O-(alpha-L-fucosyl)-L-seryl-[protein] + GDP + H(+). The enzyme catalyses L-threonyl-[protein] + GDP-beta-L-fucose = 3-O-(alpha-L-fucosyl)-L-threonyl-[protein] + GDP + H(+). The protein operates within protein modification; protein glycosylation. In terms of biological role, probable O-linked N-acetylglucosamine transferase (OGT) involved in various processes such as gibberellin (GA) signaling pathway and circadian clock. OGTs catalyze the addition of nucleotide-activated sugars directly onto the polypeptide through O-glycosidic linkage with the hydroxyl of serine or threonine. Probably acts by adding O-linked sugars to yet unknown proteins. Acts as a repressor of GA signaling pathway to inhibit hypocotyl elongation. Functions with GIGANTEA (GI) in pathways controlling flowering, circadian cotyledon movements and hypocotyl elongation. Acts as a light-regulated promoter of elongation via its interaction with GI. Acts as an activator of cytokinin signaling. Required with SEC for gamete and seed development. Its OGT activity has been proved in vitro but not in vivo. Possesses O-fucosyltransferase activity on specific serine and threonine residues. Mediates O-fucosylation of the DELLA protein RGA, a repressor of the GA signaling pathway. O-fucosylation enhances RGA activity by promoting RGA binding to key transcription factors in brassinosteroid and light-signaling pathways. Regulates root hair patterning upstream of the transcription factor WER, independently of DELLA proteins and GA signaling. Involved in abscisic acid (ABA) signaling partly through functional ABAR. Mediates O-fucosylation of CPN20 that may depress ABA responses during seed germination and seedling development. Involved in the modulation of the pace of the circadian clock by mediating O-fucosylation of APRR5, one of the core circadian clock components. O-fucosylation promotes APRR5 proteolysis. The sequence is that of Probable UDP-N-acetylglucosamine--peptide N-acetylglucosaminyltransferase SPINDLY from Arabidopsis thaliana (Mouse-ear cress).